Consider the following 111-residue polypeptide: uncharacterized protein (111 aa).

The interval 1 to 85 is disordered; the sequence is MTGLMKAFQK…TSSREDEQKL (85 aa). Over residues 11 to 23 the composition is skewed to polar residues; the sequence is LSPTKRQYAEITQ. The segment covering 24–42 has biased composition (low complexity); sequence SNSSISSSSSGSKYNDSSS. Residues 56-77 are compositionally biased toward polar residues; that stretch reads ARASTSTQAQKPASSQQKGGTS.

This is an uncharacterized protein from Microplitis demolitor (Parasitoid wasp).